Here is a 398-residue protein sequence, read N- to C-terminus: Flavohemoprotein (398 aa).

The Globin domain occupies 9 to 147 (QLTPAQIKII…LAKLLIDLEA (139 aa)). Position 93 (His93) interacts with heme b. Active-site charge relay system residues include Tyr103 and Glu146. Positions 155-398 (WRWFKDFKVT…KLEYFGPYDP (244 aa)) are reductase. In terms of domain architecture, FAD-binding FR-type spans 156 to 263 (RWFKDFKVTR…APPAGNFVYD (108 aa)). Residues Tyr196 and 212-215 (REYS) contribute to the FAD site. 276–281 (GIGITP) provides a ligand contact to NADP(+). FAD is bound at residue 395–398 (PYDP).

Belongs to the globin family. It depends on FAD as a cofactor. Requires heme b as cofactor.

The protein localises to the cytoplasm. The catalysed reaction is 2 nitric oxide + NADPH + 2 O2 = 2 nitrate + NADP(+) + H(+). It carries out the reaction 2 nitric oxide + NADH + 2 O2 = 2 nitrate + NAD(+) + H(+). With respect to regulation, inhibited by imidazoles. Functionally, nitric oxide dioxygenase involved in NO detoxification in an aerobic process, termed nitric oxide dioxygenase (NOD) reaction that utilizes O(2) and NAD(P)H to convert NO to nitrate, which protects the fungus from various noxious nitrogen compounds. Therefore, plays a central role in the inducible response to nitrosative stress. Plays a role in virulence since nitric oxide is generated by macrophages of the host immune system. This Candida albicans (strain SC5314 / ATCC MYA-2876) (Yeast) protein is Flavohemoprotein (YHB1).